Consider the following 299-residue polypeptide: Recombination-associated protein RdgC (299 aa).

The protein belongs to the RdgC family.

The protein resides in the cytoplasm. It localises to the nucleoid. Its function is as follows. May be involved in recombination. The sequence is that of Recombination-associated protein RdgC from Neisseria meningitidis serogroup C (strain 053442).